The chain runs to 87 residues: Retinal rod rhodopsin-sensitive cGMP 3',5'-cyclic phosphodiesterase subunit gamma (87 aa).

M1 bears the N-acetylmethionine mark. The segment at 16–54 is disordered; that stretch reads VVGGPVTPRKGPPKFKQRQTRQFKSKPPKKGVQGFGDDI. Residues 26-44 are compositionally biased toward basic residues; that stretch reads GPPKFKQRQTRQFKSKPPK.

This sequence belongs to the rod/cone cGMP-PDE gamma subunit family. Oligomer composed of two catalytic chains (alpha and beta), an inhibitory chain (gamma) and the delta chain.

It carries out the reaction 3',5'-cyclic GMP + H2O = GMP + H(+). Participates in processes of transmission and amplification of the visual signal. cGMP-PDEs are the effector molecules in G-protein-mediated phototransduction in vertebrate rods and cones. The chain is Retinal rod rhodopsin-sensitive cGMP 3',5'-cyclic phosphodiesterase subunit gamma (PDE6G) from Cavia porcellus (Guinea pig).